We begin with the raw amino-acid sequence, 1306 residues long: MLTSSSHHGRSYDVFLSFRGEDTRKTFVGHLFNALIEKGIHTFMDDKELKRGKSISSELMKAIGESRFAVVVFSKNYASSTWCLEELVKILEIHEKFELIVVPVFYDVDPSTVRKQNGEYAVCFTKFEANLVDDRDKVLRWREALTKVANISGHDLRNTYNGDESKCIQQILKDIFDKFCFSISITNRDLVGIESQIKKLSSLLRMDLKGVRLVGIWGMGGVGKTTAARALFNRYYQNFESACFLEDVKEYLQHHTLLYLQKTLLSKLLKVEFVDCTDTEEMCVILKRRLCSKKVLVVLDDVNHNDQLDKLVGAEDWFGSGSRIVITTRDMKLLKNHDVHETYEIKVLEKDEAIELFNLHAFKRSSPEKEFKELLNLVVDYTGGLPLALKVLGSLLYKEDLDVWISTIDRLKDNPEGEIMATLKISFDGLRDYEKSIFLDIACFFRGYNQRDMTALFHASGFHPVLGVKTLVEKSLIFILEDKIQMHDLMQEMGRQIAVQESPMRRIYRPEDVKDACIGDMRKEAIEGLLLTEPEQFEEGELEYMYSAEALKKTRRLRILVKEYYNRGFDEPVAYLPNSLLWLEWRNYSSNSFPSNFEPSKLVYLTMKGSSIIELWNGAKRLAFLTTLDLSYCHKLIQTPDFRMITNLERLILSSCDALVEVHPSVGFLKNLILLNMDHCISLERLPAIIQSECLEVLDLNYCFNLKMFPEVERNMTHLKKLDLTSTGIRELPASIEHLSSLENLQMHSCNQLVSLPSSIWRFRNLKISECEKLGSLPEIHGNSNCTRELILKLVSIKELPTSIGNLTSLNFLEICNCKTISSLSSSIWGLTSLTTLKLLDCRKLKNLPGIPNAINHLSGHGLQLLLTLEQPTIYERLDLLRIIDMSWCSCISSLPHNIWMLKFLRILCISYCSRLEYLPENLGHLEHLEELLADGTGILRLPSSVARLNKLEVLSFRKKFAIGPKVQYSSSMLNLPDDVFGSLGSLGSVVKLNLSGNGFCNLPETMNQLFCLEYLDITFCQRLEALPELPPSIKELYVDEHLALRIMEDLVIKCKELNLIAVTKIEYQNFYRWLDSIWSDVSELLENSQKQQLDDMLQLIPFSYLSTAKREEVLKIVIHGTRIPEWFRWQDRSATTMSVNLPEYWYTENFLGFAICCSCCFYHSARSYDVEFEGSMHHYNYDSSYWKEYEEPSYDFYERDSIEITAKLTPRHKGMRTEELKKVCSFSMNVLRRATAVPNMCFAFFPFNSLCHISNLQANNPNDYGIFETCLSPGDIRHRGKQWGFNLVYKDETGGSVTHEMLINR.

Positions 10–179 constitute a TIR domain; sequence RSYDVFLSFR…QILKDIFDKF (170 aa). Residues 19-24 and Gly-52 contribute to the NAD(+) site; that span reads RGEDTR. The active site involves Glu-86. The region spanning 198 to 417 is the NB-ARC domain; that stretch reads KKLSSLLRMD…IDRLKDNPEG (220 aa). 18 LRR repeats span residues 200–224, 252–275, 417–440, 599–622, 645–669, 670–693, 716–739, 741–763, 784–807, 808–831, 832–857, 878–902, 904–926, 927–949, 961–983, 987–1010, 1013–1036, and 1045–1070; these read LSSL…GVGK, LQHH…EFVD, GEIM…IFLD, PSKL…AKRL, ITNL…VGFL, KNLI…IQSE, MTHL…IEHL, SLEN…IWRF, SNCT…IGNL, TSLN…IWGL, TSLT…AINH, LDLL…IWML, FLRI…LGHL, EHLE…VARL, FAIG…VFGS, LGSV…MNQL, LEYL…SIKE, and LRIM…EYQN.

The protein belongs to the disease resistance TIR-NB-LRR family. As to quaternary structure, homodimer.

The catalysed reaction is NAD(+) + H2O = ADP-D-ribose + nicotinamide + H(+). It carries out the reaction NAD(+) = 2'cADPR + nicotinamide + H(+). Functionally, disease resistance (R) protein that specifically recognizes the Xanthomonas and Pseudomonas effector proteins XopQ and HopQ1, and triggers cell death. An NAD(+) hydrolase (NADase): in response to activation, catalyzes cleavage of NAD(+) into ADP-D-ribose (ADPR) and nicotinamide; NAD(+) cleavage triggers a defense system that promotes cell death. Makes small amounts of 2' cyclic ADPR (2'cADPR). In Nicotiana benthamiana, this protein is Disease resistance protein Roq1.